The primary structure comprises 258 residues: Isoprenyl transferase (258 aa).

Residue aspartate 38 is part of the active site. A Mg(2+)-binding site is contributed by aspartate 38. Substrate-binding positions include 39–42, tryptophan 43, arginine 51, histidine 55, and 83–85; these read GNGR and STE. The active-site Proton acceptor is the asparagine 86. Substrate-binding positions include tryptophan 87, arginine 89, arginine 206, and 212 to 214; that span reads RIS. Glutamate 225 provides a ligand contact to Mg(2+).

It belongs to the UPP synthase family. As to quaternary structure, homodimer. Mg(2+) is required as a cofactor.

Catalyzes the condensation of isopentenyl diphosphate (IPP) with allylic pyrophosphates generating different type of terpenoids. The polypeptide is Isoprenyl transferase (Bacillus anthracis).